A 380-amino-acid polypeptide reads, in one-letter code: Dual-specificity RNA methyltransferase RlmN (380 aa).

Glu-94 serves as the catalytic Proton acceptor. One can recognise a Radical SAM core domain in the interval 100-339; the sequence is DGDRATLCVS…VTVRKTRGDD (240 aa). An intrachain disulfide couples Cys-107 to Cys-344. [4Fe-4S] cluster contacts are provided by Cys-114, Cys-118, and Cys-121. S-adenosyl-L-methionine-binding positions include 168-169, Ser-200, 222-224, and Asn-301; these read GE and SLH. Residue Cys-344 is the S-methylcysteine intermediate of the active site.

The protein belongs to the radical SAM superfamily. RlmN family. [4Fe-4S] cluster is required as a cofactor.

It localises to the cytoplasm. The catalysed reaction is adenosine(2503) in 23S rRNA + 2 reduced [2Fe-2S]-[ferredoxin] + 2 S-adenosyl-L-methionine = 2-methyladenosine(2503) in 23S rRNA + 5'-deoxyadenosine + L-methionine + 2 oxidized [2Fe-2S]-[ferredoxin] + S-adenosyl-L-homocysteine. The enzyme catalyses adenosine(37) in tRNA + 2 reduced [2Fe-2S]-[ferredoxin] + 2 S-adenosyl-L-methionine = 2-methyladenosine(37) in tRNA + 5'-deoxyadenosine + L-methionine + 2 oxidized [2Fe-2S]-[ferredoxin] + S-adenosyl-L-homocysteine. Functionally, specifically methylates position 2 of adenine 2503 in 23S rRNA and position 2 of adenine 37 in tRNAs. m2A2503 modification seems to play a crucial role in the proofreading step occurring at the peptidyl transferase center and thus would serve to optimize ribosomal fidelity. This Vibrio atlanticus (strain LGP32) (Vibrio splendidus (strain Mel32)) protein is Dual-specificity RNA methyltransferase RlmN.